Reading from the N-terminus, the 330-residue chain is Aspartate--ammonia ligase (330 aa).

This sequence belongs to the class-II aminoacyl-tRNA synthetase family. AsnA subfamily.

Its subcellular location is the cytoplasm. It carries out the reaction L-aspartate + NH4(+) + ATP = L-asparagine + AMP + diphosphate + H(+). It participates in amino-acid biosynthesis; L-asparagine biosynthesis; L-asparagine from L-aspartate (ammonia route): step 1/1. The sequence is that of Aspartate--ammonia ligase from Haemophilus influenzae (strain 86-028NP).